The chain runs to 187 residues: MRAVSANYSTGSPAVKSRIELDRIQTIMESMGSKLSPGAQQLINMVRFQQWNCIPIEEQLQLVLGNAGYKQMTGLQCSSALGALDKLSSTPFPFRTGLTSGNVTENLQAYIDKSTQASSGENSTKLDECKIVPQNHSLLENDLKNATSPFLPKKANDNSNIPNSELLPFLQNLCSQVNYLLVGRKAE.

This is an uncharacterized protein from Homo sapiens (Human).